The sequence spans 316 residues: Homoserine kinase (316 aa).

97 to 107 (PHSRGLGSSAA) is an ATP binding site.

Belongs to the GHMP kinase family. Homoserine kinase subfamily.

The protein resides in the cytoplasm. It catalyses the reaction L-homoserine + ATP = O-phospho-L-homoserine + ADP + H(+). It participates in amino-acid biosynthesis; L-threonine biosynthesis; L-threonine from L-aspartate: step 4/5. Its function is as follows. Catalyzes the ATP-dependent phosphorylation of L-homoserine to L-homoserine phosphate. This is Homoserine kinase from Mycobacterium tuberculosis (strain ATCC 25618 / H37Rv).